The following is a 403-amino-acid chain: Argininosuccinate synthase (403 aa).

Position 10 to 18 (10 to 18 (AYSGGLDTS)) interacts with ATP. Tyr87 provides a ligand contact to L-citrulline. Gly117 serves as a coordination point for ATP. Thr119, Asn123, and Asp124 together coordinate L-aspartate. Asn123 is an L-citrulline binding site. Positions 127, 175, 184, 260, and 272 each coordinate L-citrulline.

This sequence belongs to the argininosuccinate synthase family. Type 1 subfamily. In terms of assembly, homotetramer.

The protein localises to the cytoplasm. The enzyme catalyses L-citrulline + L-aspartate + ATP = 2-(N(omega)-L-arginino)succinate + AMP + diphosphate + H(+). It functions in the pathway amino-acid biosynthesis; L-arginine biosynthesis; L-arginine from L-ornithine and carbamoyl phosphate: step 2/3. This chain is Argininosuccinate synthase, found in Bacillus pumilus (strain SAFR-032).